We begin with the raw amino-acid sequence, 317 residues long: Mitochondrial thiamine pyrophosphate carrier 1 (317 aa).

Solcar repeat units follow at residues 12-110, 120-206, and 214-309; these read GTRR…TTQV, PPAL…LRPV, and PFGS…SLKL. 6 helical membrane-spanning segments follow: residues 17 to 35, 91 to 107, 126 to 146, 181 to 198, 220 to 240, and 284 to 301; these read VVLS…VAPL, LMYV…YRTT, FVSG…LDLL, GCSA…LFFA, AAAG…LDLV, and GLTV…ITMW.

This sequence belongs to the mitochondrial carrier (TC 2.A.29) family.

Its subcellular location is the mitochondrion inner membrane. Mitochondrial transporter that mediates uptake of thiamine pyrophosphate (ThPP) into mitochondria. This chain is Mitochondrial thiamine pyrophosphate carrier 1 (tpc1), found in Neosartorya fischeri (strain ATCC 1020 / DSM 3700 / CBS 544.65 / FGSC A1164 / JCM 1740 / NRRL 181 / WB 181) (Aspergillus fischerianus).